Reading from the N-terminus, the 421-residue chain is MSQNGQFLEYTLQVIRRGVEMGGFPEDFYKLLSRPKRIIQVSIPVKMDNGSYEVFEGYRVQHNDALGPFKGGIRFHPEVTLADDIALAMLMTLKNSLAGLPYGGAKGAVRVDPRRLSRRELEELARGYARAVAPLIGEQLDIPAPDVGTDSQVMAWMVDEYSKLAGRNAPAVFTSKPPELWGNPVREYSTGFGVAVAAREVAKRLWGGIEGKTVAVHGAGNTGAWAAYWLEKMGAKVVAISDTRGTVVNKAGIPGEQILKVYMEKKRDKSATVLALEGEKIADSNASLYQDVDILVPAAIENVVREDNVGLVRARLVVEGANGPTTPGAERRLYERGVVVVPDILANAGGVIMSYLEWVENLQWLFWDEEETRRRLEAIMSNNVARVYARWEKEKSWTMRDAAVVTALERIYNAMKTRGWI.

Residues K70 and K94 each coordinate substrate. K106 functions as the Proton donor in the catalytic mechanism. 2 residues coordinate NADP(+): T190 and N221. A substrate-binding site is contributed by S354.

Belongs to the Glu/Leu/Phe/Val dehydrogenases family. In terms of assembly, homohexamer.

It catalyses the reaction L-glutamate + NADP(+) + H2O = 2-oxoglutarate + NH4(+) + NADPH + H(+). Its activity is regulated as follows. Is not regulated allosterically. Activity is inhibited in the presence of high ionic strength; the inhibitory effect of KCl is slightly higher than that of NaCl. Its function is as follows. Catalyzes the reversible oxidative deamination of L-glutamate to 2-oxoglutarate and ammonia, thereby playing a key role at the intersection of the carbon and nitrogen metabolic pathways. Shows a high preference for NADP(+)/NADPH as the acceptor/donor over NAD(+)/NADH. May function in vivo in the synthetic direction. Also catalyzes at very low rates the oxidative deamination of L-2-aminobutyrate, and the reductive amination of 2-oxovalerate and 2-oxobutyrate. The polypeptide is NADP(+)-dependent glutamate dehydrogenase (Pyrobaculum calidifontis (strain DSM 21063 / JCM 11548 / VA1)).